A 174-amino-acid polypeptide reads, in one-letter code: UPF0113 protein APE_0516.1 (174 aa).

The protein belongs to the UPF0113 family.

This Aeropyrum pernix (strain ATCC 700893 / DSM 11879 / JCM 9820 / NBRC 100138 / K1) protein is UPF0113 protein APE_0516.1.